A 3411-amino-acid chain; its full sequence is Genome polyprotein (3411 aa).

The Cytoplasmic segment spans residues 1 to 104; the sequence is MSGRKAQGKT…LSSRKRRSHD (104 aa). The segment at 38–72 is hydrophobic; homodimerization of capsid protein C; sequence PGPSRGVQGFIFFFLFNILTGKKITAQLKRLWKML. Positions 102 to 121 are cleaved as a propeptide — ER anchor for the capsid protein C, removed in mature form by serine protease NS3; it reads SHDVLTVQFLILGMLLMTGG. The chain crosses the membrane as a helical span at residues 105–125; that stretch reads VLTVQFLILGMLLMTGGVTLM. Residues 126–244 are Extracellular-facing; that stretch reads RKNRWLLLNV…GERQLQKIER (119 aa). Residues Asn134 and Asn150 are each glycosylated (N-linked (GlcNAc...) asparagine; by host). Residues 245-265 form a helical membrane-spanning segment; that stretch reads WFVRNPFFAVTALTIAYLVGS. Residues 266–270 lie on the Cytoplasmic side of the membrane; sequence NMTQR. Residues 271 to 285 traverse the membrane as a helical segment; it reads VVIALLVLAVGPAYS. Over 286–730 the chain is Extracellular; the sequence is AHCIGVADRD…TVFGSAFQGL (445 aa). 8 disulfide bridges follow: Cys288–Cys315, Cys345–Cys401, Cys345–Cys406, Cys359–Cys390, Cys377–Cys401, Cys377–Cys406, Cys467–Cys568, and Cys585–Cys615. The interval 383-396 is fusion peptide; the sequence is DRGWGNGCGLFGKG. The chain crosses the membrane as a helical span at residues 731 to 751; it reads FGGLNWITKVIMGAVLIWVGF. The Cytoplasmic segment spans residues 752–757; sequence NTRNMT. A helical transmembrane segment spans residues 758–778; sequence MSMSMILVGVIMMFLSLGVGA. At 779–1132 the chain is on the extracellular side; that stretch reads DQGCAINFGK…LVRSWVTAGE (354 aa). Disulfide bonds link Cys782-Cys793, Cys833-Cys921, Cys957-Cys1002, Cys1058-Cys1107, Cys1069-Cys1091, and Cys1090-Cys1094. N-linked (GlcNAc...) asparagine; by host glycosylation is found at Asn908 and Asn986. The chain crosses the membrane as a helical span at residues 1133–1153; it reads IHAVPFGLVSMMIAMEVVLRK. The Cytoplasmic portion of the chain corresponds to 1154–1201; the sequence is RQGPKQVLVGGVVLLGAMLVGQVTLLDLLELTVAVGLHFHEMNNGGDA. A helical transmembrane segment spans residues 1202–1222; that stretch reads MYMALIAAFSVRPGLLIGFGL. At 1223–1287 the chain is on the lumenal side; it reads RTLWSPRERL…ILPLMALLTP (65 aa). The chain crosses the membrane as a helical span at residues 1288–1308; that stretch reads VTMAEVRLATMLFCTVVIIGV. The Cytoplasmic portion of the chain corresponds to 1309–1355; that stretch reads LHQNSKDTSMQKTIPLVALTLTSYLGLTQPFLGLCAFLATRIFGRRS. Residues 1356 to 1376 traverse the membrane as a helical segment; the sequence is IPVNEALAATGLVGVLAGLAF. Residues 1377-1378 lie on the Lumenal side of the membrane; that stretch reads QE. The chain crosses the membrane as a helical span at residues 1379–1399; it reads MENFLGPIAVGGILMMLVSVA. Over 1400–1456 the chain is Cytoplasmic; it reads GRVDGLELKKLGEVSWEEEAEISGSSARYDVALSEQGEFKLLSEEKVPWDQVVMTSL. The interval 1407 to 1446 is interacts with and activates NS3 protease; the sequence is LKKLGEVSWEEEAEISGSSARYDVALSEQGEFKLLSEEKV. An intramembrane region (helical) is located at residues 1457–1477; that stretch reads ALVGAAIHPFALLLVLAGWLF. At 1478–2157 the chain is on the cytoplasmic side; that stretch reads HVRRARRSGD…RNALSMMPEA (680 aa). Positions 1485 to 1665 constitute a Peptidase S7 domain; that stretch reads SGDVLWDIPT…EVKEEGKEEL (181 aa). Catalysis depends on charge relay system; for serine protease NS3 activity residues His1537, Asp1561, and Ser1622. Residues 1669–1825 form the Helicase ATP-binding domain; it reads PTMLKKGKTT…HSNGEIEDVQ (157 aa). An important for RNA-binding region spans residues 1673–1676; the sequence is KKGK. 1682–1689 lines the ATP pocket; it reads FHPGAGKT. The DEAH box signature appears at 1773–1776; the sequence is DEAH. Residues 1820–1997 form the Helicase C-terminal domain; that stretch reads EIEDVQTDIP…VRGGMVAPLY (178 aa). An N6-acetyllysine; by host modification is found at Lys1877. The disordered stretch occupies residues 1942–1961; sequence AAQRRGRIGRNPNRDGDSYY. The helical transmembrane segment at 2158–2178 threads the bilayer; it reads MTIVMLFLLAGLLTSGMVIFF. At 2179–2186 the chain is on the lumenal side; that stretch reads MSPKGISR. The segment at residues 2187-2207 is an intramembrane region (helical); the sequence is MSMAKGTMAGCGYLMFLGGVE. Over 2208 to 2209 the chain is Lumenal; the sequence is PT. Residues 2210-2230 traverse the membrane as a helical segment; sequence HISYIMLIFFVLMVVVIPEPG. Residues 2231–2241 are Cytoplasmic-facing; sequence QQRSIQDNQVA. Residues 2242–2256 form a helical membrane-spanning segment; it reads FLIIGILTLVSVVAA. Residues 2257–2293 are Lumenal-facing; it reads NELGMLEKTKEDLFGKKNLIPSGASPWSWPDLDLKPG. Positions 2294–2314 form an intramembrane region, helical; sequence AAWTVYVGIVTMLSPMLHHWI. Over 2315 to 2360 the chain is Lumenal; the sequence is KVEYGNLSLSGIAQSASVLSFMDKGIPFMKMNISVIMLLVSGWNSI. Residues 2361 to 2380 form a helical membrane-spanning segment; it reads TVMPLLCGIGCAMLHWSLIL. Residues 2381–2421 lie on the Cytoplasmic side of the membrane; that stretch reads PGIKAQQSKLAQRRVFHGVAKNPVVDGNPTVDIEEAPEMPA. A helical transmembrane segment spans residues 2422–2442; sequence LYEKKLALYLLLALSLASVAM. The Lumenal segment spans residues 2443-2445; it reads CRT. The chain crosses the membrane as a helical span at residues 2446-2466; it reads PFSLDEGIVLASAALGPLIEG. Residues 2467 to 3411 lie on the Cytoplasmic side of the membrane; that stretch reads NTSLLWNGPM…DADLQPGELI (945 aa). Positions 2507 to 2771 constitute an mRNA cap 0-1 NS5-type MT domain; the sequence is GTANGKTLGE…DVTLPIGTRS (265 aa). Ser2562 lines the S-adenosyl-L-methionine pocket. A Phosphoserine modification is found at Ser2562. Residue Lys2567 is the For 2'-O-MTase activity of the active site. Positions 2592, 2593, 2610, 2611, 2637, and 2638 each coordinate S-adenosyl-L-methionine. Asp2652 serves as the catalytic For 2'-O-MTase activity. Position 2653 (Ile2653) interacts with S-adenosyl-L-methionine. Residues Lys2688 and Glu2724 each act as for 2'-O-MTase activity in the active site. Tyr2726 contributes to the S-adenosyl-L-methionine binding site. A Nuclear localization signal motif is present at residues 2878 to 2911; the sequence is RKIMKVVNRWLFRHLAREKNPRLCTKEEFIAKVR. Residues Glu2945, His2949, Cys2954, and Cys2957 each contribute to the Zn(2+) site. A RdRp catalytic domain is found at 3035-3187; the sequence is GGLYADDTAG…RPIDDRFGLA (153 aa). Zn(2+) contacts are provided by His3222, Cys3238, and Cys3357.

It in the N-terminal section; belongs to the class I-like SAM-binding methyltransferase superfamily. mRNA cap 0-1 NS5-type methyltransferase family. In terms of assembly, homodimer. Interacts (via N-terminus) with host EXOC1 (via C-terminus); this interaction results in EXOC1 degradation through the proteasome degradation pathway. As to quaternary structure, forms heterodimers with envelope protein E in the endoplasmic reticulum and Golgi. Homodimer; in the endoplasmic reticulum and Golgi. Interacts with protein prM. Interacts with non-structural protein 1. In terms of assembly, homodimer; Homohexamer when secreted. Interacts with envelope protein E. As to quaternary structure, interacts (via N-terminus) with serine protease NS3. Forms a heterodimer with serine protease NS3. May form homooligomers. In terms of assembly, forms a heterodimer with NS2B. Interacts with non-structural protein 2A (via N-terminus). Interacts with NS4B. Interacts with unphosphorylated RNA-directed RNA polymerase NS5; this interaction stimulates RNA-directed RNA polymerase NS5 guanylyltransferase activity. NS3 interacts with host PDCD6IP; this interaction contributes to virion release. As to quaternary structure, interacts with serine protease NS3. Homodimer. Interacts with host STAT2; this interaction prevents the establishment of cellular antiviral state. Interacts with serine protease NS3. Interacts with host TRIM23; this interaction leads to NS5 ubiquitination. Post-translationally, specific enzymatic cleavages in vivo yield mature proteins. The nascent capsid protein C contains a C-terminal hydrophobic domain that act as a signal sequence for translocation of prM into the lumen of the ER. Mature capsid protein C is cleaved at a site upstream of this hydrophobic domain by NS3. prM is cleaved in post-Golgi vesicles by a host furin, releasing the mature small envelope protein M, and peptide pr. Non-structural protein 2A-alpha, a C-terminally truncated form of non-structural protein 2A, results from partial cleavage by NS3. Specific enzymatic cleavages in vivo yield mature proteins peptide 2K acts as a signal sequence and is removed from the N-terminus of NS4B by the host signal peptidase in the ER lumen. Signal cleavage at the 2K-4B site requires a prior NS3 protease-mediated cleavage at the 4A-2K site. In terms of processing, cleaved in post-Golgi vesicles by a host furin, releasing the mature small envelope protein M, and peptide pr. This cleavage is incomplete as up to 30% of viral particles still carry uncleaved prM. N-glycosylated. Post-translationally, N-glycosylated. The excreted form is glycosylated and this is required for efficient secretion of the protein from infected cells. In terms of processing, polyubiquitinated; ubiquitination is probably mediated by host TRIM23 and is prerequisite for NS5-STAT2 interaction. NS5 is not ISGylated or sumoylated. Acetylated by host KAT5. Acetylation modulates NS3 RNA-binding and unwinding activities and plays an important positive role for viral replication. Post-translationally, phosphorylated on serines residues. This phosphorylation may trigger NS5 nuclear localization.

It localises to the virion. The protein resides in the host nucleus. Its subcellular location is the host cytoplasm. The protein localises to the host perinuclear region. It is found in the secreted. It localises to the virion membrane. The protein resides in the host endoplasmic reticulum membrane. The enzyme catalyses Selective hydrolysis of -Xaa-Xaa-|-Yaa- bonds in which each of the Xaa can be either Arg or Lys and Yaa can be either Ser or Ala.. It catalyses the reaction RNA(n) + a ribonucleoside 5'-triphosphate = RNA(n+1) + diphosphate. It carries out the reaction a ribonucleoside 5'-triphosphate + H2O = a ribonucleoside 5'-diphosphate + phosphate + H(+). The catalysed reaction is ATP + H2O = ADP + phosphate + H(+). The enzyme catalyses a 5'-end (5'-triphosphoguanosine)-ribonucleoside in mRNA + S-adenosyl-L-methionine = a 5'-end (N(7)-methyl 5'-triphosphoguanosine)-ribonucleoside in mRNA + S-adenosyl-L-homocysteine. It catalyses the reaction a 5'-end (N(7)-methyl 5'-triphosphoguanosine)-ribonucleoside in mRNA + S-adenosyl-L-methionine = a 5'-end (N(7)-methyl 5'-triphosphoguanosine)-(2'-O-methyl-ribonucleoside) in mRNA + S-adenosyl-L-homocysteine + H(+). Plays a role in virus budding by binding to the cell membrane and gathering the viral RNA into a nucleocapsid that forms the core of a mature virus particle. During virus entry, may induce genome penetration into the host cytoplasm after hemifusion induced by the surface proteins. Can migrate to the cell nucleus where it modulates host functions. Functionally, inhibits RNA silencing by interfering with host Dicer. Its function is as follows. Prevents premature fusion activity of envelope proteins in trans-Golgi by binding to envelope protein E at pH6.0. After virion release in extracellular space, gets dissociated from E dimers. In terms of biological role, acts as a chaperone for envelope protein E during intracellular virion assembly by masking and inactivating envelope protein E fusion peptide. prM is the only viral peptide matured by host furin in the trans-Golgi network probably to avoid catastrophic activation of the viral fusion activity in acidic Golgi compartment prior to virion release. prM-E cleavage is inefficient, and many virions are only partially matured. These uncleaved prM would play a role in immune evasion. May play a role in virus budding. Exerts cytotoxic effects by activating a mitochondrial apoptotic pathway through M ectodomain. May display a viroporin activity. Functionally, binds to host cell surface receptor and mediates fusion between viral and cellular membranes. Envelope protein is synthesized in the endoplasmic reticulum in the form of heterodimer with protein prM. They play a role in virion budding in the ER, and the newly formed immature particle is covered with 60 spikes composed of heterodimer between precursor prM and envelope protein E. The virion is transported to the Golgi apparatus where the low pH causes dissociation of PrM-E heterodimers and formation of E homodimers. prM-E cleavage is inefficient, and many virions are only partially matured. These uncleaved prM would play a role in immune evasion. Its function is as follows. Involved in immune evasion, pathogenesis and viral replication. Once cleaved off the polyprotein, is targeted to three destinations: the viral replication cycle, the plasma membrane and the extracellular compartment. Essential for viral replication. Required for formation of the replication complex and recruitment of other non-structural proteins to the ER-derived membrane structures. Excreted as a hexameric lipoparticle that plays a role against host immune response. Antagonizing the complement function. Binds to the host macrophages and dendritic cells. Inhibits signal transduction originating from Toll-like receptor 3 (TLR3). In terms of biological role, component of the viral RNA replication complex that functions in virion assembly and antagonizes the host immune response. Required cofactor for the serine protease function of NS3. May have membrane-destabilizing activity and form viroporins. Functionally, displays three enzymatic activities: serine protease, NTPase and RNA helicase. NS3 serine protease, in association with NS2B, performs its autocleavage and cleaves the polyprotein at dibasic sites in the cytoplasm: C-prM, NS2A-NS2B, NS2B-NS3, NS3-NS4A, NS4A-2K and NS4B-NS5. NS3 RNA helicase binds RNA and unwinds dsRNA in the 3' to 5' direction. Also plays a role in virus assembly. Its function is as follows. Regulates the ATPase activity of the NS3 helicase activity. NS4A allows NS3 helicase to conserve energy during unwinding. In terms of biological role, functions as a signal peptide for NS4B and is required for the interferon antagonism activity of the latter. Induces the formation of ER-derived membrane vesicles where the viral replication takes place. Inhibits interferon (IFN)-induced host STAT1 phosphorylation and nuclear translocation, thereby preventing the establishment of cellular antiviral state by blocking the IFN-alpha/beta pathway. Functionally, replicates the viral (+) and (-) RNA genome, and performs the capping of genomes in the cytoplasm. NS5 methylates viral RNA cap at guanine N-7 and ribose 2'-O positions. Besides its role in RNA genome replication, also prevents the establishment of cellular antiviral state by blocking the interferon-alpha/beta (IFN-alpha/beta) signaling pathway. IFN-I induces binding of NS5 to host IFN-activated transcription factor STAT2, preventing its transcriptional activity. Host TRIM23 is the E3 ligase that interacts with and polyubiquitinates NS5 to promote its binding to STAT2 and trigger IFN-I signaling inhibition. In Aedes aegypti (Yellowfever mosquito), this protein is Genome polyprotein.